Reading from the N-terminus, the 126-residue chain is Small ribosomal subunit protein uS13 (126 aa).

Residues 99–126 (LRGQSTKNNARTRKGKKKTVANKKKATK) form a disordered region. Basic residues predominate over residues 108 to 126 (ARTRKGKKKTVANKKKATK).

This sequence belongs to the universal ribosomal protein uS13 family. In terms of assembly, part of the 30S ribosomal subunit. Forms a loose heterodimer with protein S19. Forms two bridges to the 50S subunit in the 70S ribosome.

In terms of biological role, located at the top of the head of the 30S subunit, it contacts several helices of the 16S rRNA. In the 70S ribosome it contacts the 23S rRNA (bridge B1a) and protein L5 of the 50S subunit (bridge B1b), connecting the 2 subunits; these bridges are implicated in subunit movement. Contacts the tRNAs in the A and P-sites. The chain is Small ribosomal subunit protein uS13 from Porphyromonas gingivalis (strain ATCC 33277 / DSM 20709 / CIP 103683 / JCM 12257 / NCTC 11834 / 2561).